We begin with the raw amino-acid sequence, 586 residues long: CTP synthase (586 aa).

Residues 1–278 (MRKHPQTATK…DAFVVRRLNL (278 aa)) are amidoligase domain. Position 20 (serine 20) interacts with CTP. Serine 20 contributes to the UTP binding site. ATP contacts are provided by residues 21-26 (SLGKGL) and aspartate 78. Residues aspartate 78 and glutamate 152 each contribute to the Mg(2+) site. CTP-binding positions include 159 to 161 (DIE), 199 to 204 (KTKPTQ), and lysine 235. Residues 199 to 204 (KTKPTQ) and lysine 235 each bind UTP. Residues 303-551 (RIALVGKYVE…VGAAIDYKAG (249 aa)) form the Glutamine amidotransferase type-1 domain. Position 366 (glycine 366) interacts with L-glutamine. Cysteine 393 functions as the Nucleophile; for glutamine hydrolysis in the catalytic mechanism. Residues 394 to 397 (LGLQ), glutamate 416, and arginine 477 contribute to the L-glutamine site. Residues histidine 524 and glutamate 526 contribute to the active site. A disordered region spans residues 560 to 586 (EIPEHTPNGSSHRDGVGQPLPEPASRG).

Belongs to the CTP synthase family. As to quaternary structure, homotetramer.

It carries out the reaction UTP + L-glutamine + ATP + H2O = CTP + L-glutamate + ADP + phosphate + 2 H(+). The enzyme catalyses L-glutamine + H2O = L-glutamate + NH4(+). The catalysed reaction is UTP + NH4(+) + ATP = CTP + ADP + phosphate + 2 H(+). The protein operates within pyrimidine metabolism; CTP biosynthesis via de novo pathway; CTP from UDP: step 2/2. With respect to regulation, allosterically activated by GTP, when glutamine is the substrate; GTP has no effect on the reaction when ammonia is the substrate. The allosteric effector GTP functions by stabilizing the protein conformation that binds the tetrahedral intermediate(s) formed during glutamine hydrolysis. Inhibited by the product CTP, via allosteric rather than competitive inhibition. Functionally, catalyzes the ATP-dependent amination of UTP to CTP with either L-glutamine or ammonia as the source of nitrogen. Regulates intracellular CTP levels through interactions with the four ribonucleotide triphosphates. The protein is CTP synthase of Mycobacterium tuberculosis (strain ATCC 25177 / H37Ra).